The sequence spans 78 residues: Large ribosomal subunit protein bL28 (78 aa).

The protein belongs to the bacterial ribosomal protein bL28 family.

This is Large ribosomal subunit protein bL28 (rpmB) from Treponema pallidum (strain Nichols).